A 175-amino-acid polypeptide reads, in one-letter code: MRLVLSGASSFTSNLFCSSQQVNGRGKELKNPISLNHNKDLDFLLKKLAPPLTAVLLAVSPICFPPESLGQTLDIQRGATLFNRACIGCHDTGGNIIQPGATLFTKDLERNGVDTEEEIYRVTYFGKGRMPGFGEKCTPRGQCTFGPRLQDEEIKLLAEFVKFQADQGWPTVSTD.

Heme c-binding residues include C86, C89, and H90. Position 98–102 (98–102 (QPGAT)) interacts with heme. M130 contacts heme c.

It belongs to the cytochrome c family. PetJ subfamily. Monomer. Interacts in vitro with LTO1. In terms of processing, binds 1 heme c group covalently per subunit.

It is found in the plastid. The protein resides in the chloroplast thylakoid lumen. Functionally, functions as an electron carrier between membrane-bound cytochrome b6-f and photosystem I in oxygenic photosynthesis. The protein is Cytochrome c6, chloroplastic (PETJ) of Arabidopsis thaliana (Mouse-ear cress).